The following is a 725-amino-acid chain: ATP-dependent zinc metalloprotease FtsH (725 aa).

Residues 1–11 (MDKMKKPKINW) are Cytoplasmic-facing. Residues 12 to 32 (LLIVIVGIIAALLITVLVLLF) traverse the membrane as a helical segment. At 33 to 160 (SPKTQPKSFD…LFGQHIVQEN (128 aa)) the chain is on the extracellular side. Residues 161 to 181 (GFITFIKAIWFPALIAIIIFL) traverse the membrane as a helical segment. The Cytoplasmic segment spans residues 182-725 (GYKAQSRAAS…EEETLAEKAE (544 aa)). 252-259 (GPPGTGKT) contacts ATP. Histidine 474 is a Zn(2+) binding site. Residue glutamate 475 is part of the active site. Zn(2+)-binding residues include histidine 478 and aspartate 552. The tract at residues 680–725 (QVNESQEKDKQKNAQIKEDLSKMDKKDNLTKAKDKGEEETLAEKAE) is disordered. Residues 684–725 (SQEKDKQKNAQIKEDLSKMDKKDNLTKAKDKGEEETLAEKAE) are compositionally biased toward basic and acidic residues.

In the central section; belongs to the AAA ATPase family. The protein in the C-terminal section; belongs to the peptidase M41 family. Homohexamer. The cofactor is Zn(2+).

It localises to the cell membrane. Its function is as follows. Acts as a processive, ATP-dependent zinc metallopeptidase for both cytoplasmic and membrane proteins. Plays a role in the quality control of integral membrane proteins. The protein is ATP-dependent zinc metalloprotease FtsH of Mycoplasmopsis pulmonis (strain UAB CTIP) (Mycoplasma pulmonis).